Consider the following 207-residue polypeptide: Small ribosomal subunit protein uS4 (207 aa).

A disordered region spans residues 26–53; sequence KPFDVKTKKHAKAPGQHGQARGKQSEYS. Residues 97–159 enclose the S4 RNA-binding domain; sequence SRLDNVVYRM…AKQQLRIKNA (63 aa).

This sequence belongs to the universal ribosomal protein uS4 family. Part of the 30S ribosomal subunit. Contacts protein S5. The interaction surface between S4 and S5 is involved in control of translational fidelity.

In terms of biological role, one of the primary rRNA binding proteins, it binds directly to 16S rRNA where it nucleates assembly of the body of the 30S subunit. Functionally, with S5 and S12 plays an important role in translational accuracy. The sequence is that of Small ribosomal subunit protein uS4 from Acinetobacter baylyi (strain ATCC 33305 / BD413 / ADP1).